The following is a 69-amino-acid chain: Microcin H47 immunity protein MchI (69 aa).

Over 1-6 (MSYKKL) the chain is Cytoplasmic. Residues 7–29 (YQLTAIFSLPLTILLVSLSSLRI) form a helical membrane-spanning segment. Over 30 to 38 (VGEGNSYVD) the chain is Periplasmic. A helical membrane pass occupies residues 39–61 (VFLSFIIFLGFIELIHGIRKILV). Residues 62–69 (WSGWKNGS) lie on the Cytoplasmic side of the membrane.

It localises to the cell membrane. Protects a microcin H47-producer cell against microcin H47. This is Microcin H47 immunity protein MchI (mchI) from Escherichia coli.